The sequence spans 476 residues: Probable serine carboxypeptidase CPVL (476 aa).

A signal peptide spans 1 to 22 (MVGTMWKVIVSLVLLMPGSCDG). Residues asparagine 81 and asparagine 132 are each glycosylated (N-linked (GlcNAc...) asparagine). Serine 204 is an active-site residue. 2 N-linked (GlcNAc...) asparagine glycosylation sites follow: asparagine 307 and asparagine 346. Active-site residues include aspartate 388 and histidine 448.

This sequence belongs to the peptidase S10 family.

Functionally, may be involved in the digestion of phagocytosed particles in the lysosome, participation in an inflammatory protease cascade, and trimming of peptides for antigen presentation. This chain is Probable serine carboxypeptidase CPVL (CPVL), found in Pongo abelii (Sumatran orangutan).